The chain runs to 875 residues: Ectonucleotide pyrophosphatase/phosphodiesterase family member 3 (875 aa).

At 1 to 11 the chain is on the cytoplasmic side; it reads MDSRLALATEE. Residues 12–30 traverse the membrane as a helical; Signal-anchor for type II membrane protein segment; it reads PIKKDSLKRYKILCAVLLA. The Extracellular portion of the chain corresponds to 31-875; it reads LLVIVSLGLG…TYLPTFETII (845 aa). 2 consecutive SMB domains span residues 51–94 and 95–139; these read HIGS…VKST and QIWT…GEVP. Cystine bridges form between C55/C72, C59/C90, C70/C83, C76/C82, C99/C116, C104/C134, C114/C127, C120/C126, C145/C191, and C153/C365. The Cell attachment site signature appears at 79–81; the sequence is RGD. The segment at 161-545 is phosphodiesterase; the sequence is PVILFSMDGF…HGSLNHLLKA (385 aa). Zn(2+) is bound at residue D168. An ATP-binding site is contributed by K205. T206 is a binding site for Zn(2+). The Nucleophile role is filled by T206. Residue N227 participates in ATP binding. N-linked (GlcNAc...) asparagine glycosylation occurs at N237. D276 serves as a coordination point for ATP. N-linked (GlcNAc...) asparagine glycosylation is found at N280 and N289. Y290 lines the ATP pocket. The Zn(2+) site is built by D326, H330, D373, and H374. Disulfide bonds link C381/C478, C429/C818, C562/C623, C575/C679, C577/C664, and C787/C797. H483 is a Zn(2+) binding site. N-linked (GlcNAc...) asparagine glycosylation is found at N533, N574, N594, and N702. The tract at residues 582–875 is nuclease; sequence TSGQEEQVNQ…TYLPTFETII (294 aa). Ca(2+)-binding residues include D752, N754, D756, H758, and D760. An N-linked (GlcNAc...) asparagine glycan is attached at N789.

Belongs to the nucleotide pyrophosphatase/phosphodiesterase family. In terms of assembly, monomer and homodimer. Zn(2+) serves as cofactor. The N-terminal is blocked. Post-translationally, N-glycosylated. N-glycosylation is necessary for normal transport to the cell membrane, but is not the apical targeting signal. In terms of tissue distribution, detected in intestinal epithelium and liver (at protein level).

The protein localises to the cell membrane. It localises to the apical cell membrane. Its subcellular location is the secreted. It carries out the reaction Hydrolytically removes 5'-nucleotides successively from the 3'-hydroxy termini of 3'-hydroxy-terminated oligonucleotides.. It catalyses the reaction a ribonucleoside 5'-triphosphate + H2O = a ribonucleoside 5'-phosphate + diphosphate + H(+). The enzyme catalyses ATP + H2O = AMP + diphosphate + H(+). The catalysed reaction is CTP + H2O = CMP + diphosphate + H(+). It carries out the reaction GTP + H2O = GMP + diphosphate + H(+). It catalyses the reaction UTP + H2O = UMP + diphosphate + H(+). The enzyme catalyses UDP-N-acetyl-alpha-D-glucosamine + H2O = N-acetyl-alpha-D-glucosamine 1-phosphate + UMP + 2 H(+). The catalysed reaction is P(1),P(3)-bis(5'-adenosyl) triphosphate + H2O = AMP + ADP + 2 H(+). It carries out the reaction P(1),P(4)-bis(5'-adenosyl) tetraphosphate + H2O = AMP + ATP + 2 H(+). It catalyses the reaction P(1),P(5)-bis(5'-adenosyl) pentaphosphate + H2O = adenosine 5'-tetraphosphate + AMP + 2 H(+). The enzyme catalyses P(1),P(4)-bis(5'-guanosyl) tetraphosphate + H2O = GMP + GTP + 2 H(+). Its function is as follows. Hydrolase that metabolizes extracellular nucleotides, including ATP, GTP, UTP and CTP. Limits mast cells and basophils response during inflammation and during the chronic phases of allergic responses by eliminating extracellular ATP, a signaling molecule activating these cells in an autocrine manner. Metabolizes extracellular ATP in the lumen of the small intestine, and thereby prevents ATP-induced apoptosis of intestinal plasmacytoid dendritic cells. Has a broad specificity and can also hydrolyze UDP-GlcNAc into UMP and GlcNAc-1-phosphate and potentially several other intracellular nucleotide sugars, including UDP-GalNAc, CMP-NeuAc, GDP-Fuc, and UDP-GlcA. Thereby, could modulate glycan biosynthesis and protein glycosylation. Can hydrolyze extracellular dinucleoside polyphosphates, including the vasoactive adenosine polyphosphates as well. In addition, displays an alkaline phosphodiesterase activity in vitro. This chain is Ectonucleotide pyrophosphatase/phosphodiesterase family member 3, found in Rattus norvegicus (Rat).